A 690-amino-acid chain; its full sequence is MGTVRSRRLWWPLPLLLLLLRGPAGARAQEDDDGDYEELVLALRSEEDGLAEAPQHGATATFHRCAKDPWRLPGTYVVVLKEETQRSQPERTARRLQAQAARRGYLIKLLHVFHDLLPGFLVKMSRDLLELALRLPHVDYIEEDSYVFAQSIPWNLERITPARYRADEYQPPNGGSLVEVYLLDTSIQSGHREIEGRVMVTDFESVPEEDGTRFHRQASKCDSHGTHLAGVVSGRDAGVAKGASLRSLRVLNCQGKGTVSSTLIGLEFIRKNQLVQPVGPLVVLLPLAGGYSRVLNAACQRLAKAGVVLVAAAGNFRDDACLYSPASAPEVITVGATNAQDQPVTLGTLGTNFGRCVDLFAPGEDIIGASSDCSTCFVSRSGTSQAAAHVAGIAAMMLSAEPELTLAELRQRLIHFSAKDVINEAWFPEDQRVLTPNLVAALPPSTHGAGWQLFCRTVWSAHSGPTRMATAMARCAPDEELLSCSSFSRSGKRRGERIKAQGGRRVCLAHNAFGGEGVYAIARCCLLPQANCSVHTAPPAGAGMGTRVHCHHQGHVLTGCSSHWEVEDLGTHKPSVLRPRVQPDQCMGHSGASTHASCCHAPGLECKVKEHGLPAPQEQVTVACEEGWTLTGCSALPGTSHVLGAYAVDDTCVVRSRDVSTTGNTSEQAVAAVAICCRSRHLAQASQELQ.

The first 28 residues, 1–28 (MGTVRSRRLWWPLPLLLLLLRGPAGARA), serve as a signal peptide directing secretion. Positions 29–150 (QEDDDGDYEE…IEEDSYVFAQ (122 aa)) are excised as a propeptide. A Sulfotyrosine modification is found at Tyr36. Ser45 is modified (phosphoserine). The 73-residue stretch at 75 to 147 (TYVVVLKEET…VDYIEEDSYV (73 aa)) folds into the Inhibitor I9 domain. The 307-residue stretch at 153-459 (PWNLERITPA…GWQLFCRTVW (307 aa)) folds into the Peptidase S8 domain. Active-site charge relay system residues include Asp184 and His224. 2 disulfide bridges follow: Cys221–Cys253 and Cys321–Cys356. Catalysis depends on Ser384, which acts as the Charge relay system. The C-terminal domain stretch occupies residues 448–690 (GAGWQLFCRT…HLAQASQELQ (243 aa)). Intrachain disulfides connect Cys455–Cys525, Cys475–Cys524, and Cys484–Cys507. An N-linked (GlcNAc...) asparagine glycan is attached at Asn531. Disulfide bonds link Cys532/Cys599, Cys550/Cys598, Cys560/Cys586, Cys606/Cys677, Cys624/Cys676, and Cys633/Cys652. Ser686 is subject to Phosphoserine.

Belongs to the peptidase S8 family. As to quaternary structure, monomer. Can self-associate to form dimers and higher multimers which may have increased LDLR degrading activity. The precursor protein but not the mature protein may form multimers. Interacts with APOB, VLDLR, LRP8/APOER2 and BACE1. The full-length immature form (pro-PCSK9) interacts with SCNN1A, SCNN1B and SCNN1G. The pro-PCSK9 form (via C-terminal domain) interacts with LDLR. Interacts (via the C-terminal domain) with ANXA2 (via repeat Annexin 1); the interaction inhibits the degradation of LDLR. Requires Ca(2+) as cofactor. Cleavage by furin and PCSK5 generates a truncated inactive protein that is unable to induce LDLR degradation. In terms of processing, undergoes autocatalytic cleavage in the endoplasmic reticulum to release the propeptide from the N-terminus and the cleavage of the propeptide is strictly required for its maturation and activation. The cleaved propeptide however remains associated with the catalytic domain through non-covalent interactions, preventing potential substrates from accessing its active site. As a result, it is secreted from cells as a propeptide-containing, enzymatically inactive protein. Post-translationally, phosphorylation protects the propeptide against proteolysis.

The protein resides in the cytoplasm. It is found in the secreted. Its subcellular location is the endosome. It localises to the lysosome. The protein localises to the cell surface. The protein resides in the endoplasmic reticulum. It is found in the golgi apparatus. Its activity is regulated as follows. Its proteolytic activity is autoinhibited by the non-covalent binding of the propeptide to the catalytic domain. Inhibited by EGTA. Functionally, crucial player in the regulation of plasma cholesterol homeostasis. Binds to low-density lipid receptor family members: low density lipoprotein receptor (LDLR), very low density lipoprotein receptor (VLDLR), apolipoprotein E receptor (LRP1/APOER) and apolipoprotein receptor 2 (LRP8/APOER2), and promotes their degradation in intracellular acidic compartments. Acts via a non-proteolytic mechanism to enhance the degradation of the hepatic LDLR through a clathrin LDLRAP1/ARH-mediated pathway. May prevent the recycling of LDLR from endosomes to the cell surface or direct it to lysosomes for degradation. Can induce ubiquitination of LDLR leading to its subsequent degradation. Inhibits intracellular degradation of APOB via the autophagosome/lysosome pathway in a LDLR-independent manner. Involved in the disposal of non-acetylated intermediates of BACE1 in the early secretory pathway. Inhibits epithelial Na(+) channel (ENaC)-mediated Na(+) absorption by reducing ENaC surface expression primarily by increasing its proteasomal degradation. Regulates neuronal apoptosis via modulation of LRP8/APOER2 levels and related anti-apoptotic signaling pathways. This chain is Proprotein convertase subtilisin/kexin type 9 (PCSK9), found in Ateles geoffroyi (Black-handed spider monkey).